The following is a 191-amino-acid chain: MKKNLLGFTLASLLFTTGSAVAAEYKIDKEGQHAFVNFRIQHLSYSWLYGTFKDFDGTFTFDEKNPSADKVNVTINTNSVDTNHAERDKHLRSAEFLNVAKFPQATFTSTSVKKEGDELDITGNLTLNGVTKPVTLEAKLMGQGDDPWGGKRAGFEAEGKIKLKDFNITTDLGPASQEVELIISVEGVQQK.

A signal peptide spans 1-22 (MKKNLLGFTLASLLFTTGSAVA).

This sequence belongs to the UPF0312 family. Type 1 subfamily.

Its subcellular location is the periplasm. The polypeptide is Protein YceI (Salmonella newport (strain SL254)).